A 232-amino-acid polypeptide reads, in one-letter code: Probable proteasome subunit alpha type-3 (232 aa).

It belongs to the peptidase T1A family. As to quaternary structure, the 26S proteasome consists of a 20S proteasome core and two 19S regulatory subunits. The 20S proteasome core is composed of 28 subunits that are arranged in four stacked rings, resulting in a barrel-shaped structure. The two end rings are each formed by seven alpha subunits, and the two central rings are each formed by seven beta subunits. The catalytic chamber with the active sites is on the inside of the barrel.

The protein localises to the cytoplasm. It localises to the nucleus. In terms of biological role, the proteasome degrades poly-ubiquitinated proteins in the cytoplasm and in the nucleus. It is essential for the regulated turnover of proteins and for the removal of misfolded proteins. The proteasome is a multicatalytic proteinase complex that is characterized by its ability to cleave peptides with Arg, Phe, Tyr, Leu, and Glu adjacent to the leaving group at neutral or slightly basic pH. It has an ATP-dependent proteolytic activity. The protein is Probable proteasome subunit alpha type-3 (PRE9) of Encephalitozoon cuniculi (strain GB-M1) (Microsporidian parasite).